The sequence spans 135 residues: Fatty acid-binding protein homolog 6 (135 aa).

A fatty acid is bound by residues Arg110 and 130–132; that span reads REY.

The protein belongs to the calycin superfamily. Fatty-acid binding protein (FABP) family.

The protein is Fatty acid-binding protein homolog 6 (lbp-6) of Caenorhabditis elegans.